Here is a 98-residue protein sequence, read N- to C-terminus: Beta-2-microglobulin (98 aa).

Residues 4–92 enclose the Ig-like C1-type domain; that stretch reads PKVQVYSRFP…HETLKEPQVY (89 aa). A disulfide bond links cysteine 24 and cysteine 79.

It belongs to the beta-2-microglobulin family. In terms of assembly, heterodimer of an alpha chain and a beta chain. Beta-2-microglobulin is the beta-chain of major histocompatibility complex class I molecules.

Its subcellular location is the secreted. Functionally, component of the class I major histocompatibility complex (MHC). Involved in the presentation of peptide antigens to the immune system. This Meleagris gallopavo (Wild turkey) protein is Beta-2-microglobulin (B2M).